Consider the following 48-residue polypeptide: Large ribosomal subunit protein bL33A (48 aa).

This sequence belongs to the bacterial ribosomal protein bL33 family.

This is Large ribosomal subunit protein bL33A from Metamycoplasma arthritidis (strain 158L3-1) (Mycoplasma arthritidis).